The chain runs to 282 residues: Proteasome subunit beta (282 aa).

Residues 1-54 constitute a propeptide, removed in mature form; by autocatalysis; that stretch reads MGSHRDLPAGMVNHIFTNSGISSFTEFVGSYAPDLLPGRNETLAAPVGDRIPHA. Thr55 acts as the Nucleophile in catalysis.

It belongs to the peptidase T1B family. As to quaternary structure, the 20S proteasome core is composed of 14 alpha and 14 beta subunits that assemble into four stacked heptameric rings, resulting in a barrel-shaped structure. The two inner rings, each composed of seven catalytic beta subunits, are sandwiched by two outer rings, each composed of seven alpha subunits. The catalytic chamber with the active sites is on the inside of the barrel. Has a gated structure, the ends of the cylinder being occluded by the N-termini of the alpha-subunits. Is capped by the proteasome-associated ATPase, ARC.

It is found in the cytoplasm. The enzyme catalyses Cleavage of peptide bonds with very broad specificity.. The protein operates within protein degradation; proteasomal Pup-dependent pathway. With respect to regulation, the formation of the proteasomal ATPase ARC-20S proteasome complex, likely via the docking of the C-termini of ARC into the intersubunit pockets in the alpha-rings, may trigger opening of the gate for substrate entry. Interconversion between the open-gate and close-gate conformations leads to a dynamic regulation of the 20S proteasome proteolysis activity. Its function is as follows. Component of the proteasome core, a large protease complex with broad specificity involved in protein degradation. This is Proteasome subunit beta from Streptosporangium roseum (strain ATCC 12428 / DSM 43021 / JCM 3005 / KCTC 9067 / NCIMB 10171 / NRRL 2505 / NI 9100).